A 91-amino-acid chain; its full sequence is Putative regulatory protein Cphy_2880 (91 aa).

Belongs to the RemA family.

The chain is Putative regulatory protein Cphy_2880 from Lachnoclostridium phytofermentans (strain ATCC 700394 / DSM 18823 / ISDg) (Clostridium phytofermentans).